The following is a 668-amino-acid chain: UvrABC system protein B (668 aa).

The region spanning 36 to 423 (DNIKGGEKAQ…TETVVEQIIR (388 aa)) is the Helicase ATP-binding domain. Residue 49 to 56 (GATGTGKT) participates in ATP binding. A Beta-hairpin motif is present at residues 102-125 (YYDYYQPEAYVPSSDTYIEKDSSI). The Helicase C-terminal domain maps to 440–606 (QMDDLLGEIN…TIKKEIRDLI (167 aa)). Positions 632–667 (QEAIKKLQKQMHEAAELLDFELAAQIRDMVLELKSM) constitute a UVR domain.

It belongs to the UvrB family. As to quaternary structure, forms a heterotetramer with UvrA during the search for lesions. Interacts with UvrC in an incision complex.

Its subcellular location is the cytoplasm. Functionally, the UvrABC repair system catalyzes the recognition and processing of DNA lesions. A damage recognition complex composed of 2 UvrA and 2 UvrB subunits scans DNA for abnormalities. Upon binding of the UvrA(2)B(2) complex to a putative damaged site, the DNA wraps around one UvrB monomer. DNA wrap is dependent on ATP binding by UvrB and probably causes local melting of the DNA helix, facilitating insertion of UvrB beta-hairpin between the DNA strands. Then UvrB probes one DNA strand for the presence of a lesion. If a lesion is found the UvrA subunits dissociate and the UvrB-DNA preincision complex is formed. This complex is subsequently bound by UvrC and the second UvrB is released. If no lesion is found, the DNA wraps around the other UvrB subunit that will check the other stand for damage. This is UvrABC system protein B from Streptococcus thermophilus (strain CNRZ 1066).